Reading from the N-terminus, the 146-residue chain is Small ribosomal subunit protein eS17 (146 aa).

The protein belongs to the eukaryotic ribosomal protein eS17 family. As to quaternary structure, component of the small ribosomal subunit (SSU). Mature N.crassa ribosomes consist of a small (40S) and a large (60S) subunit. The 40S small subunit contains 1 molecule of ribosomal RNA (18S rRNA) and at least 32 different proteins. The large 60S subunit contains 3 rRNA molecules (26S, 5.8S and 5S rRNA) and at least 42 different proteins.

The protein resides in the cytoplasm. Its function is as follows. Component of the ribosome, a large ribonucleoprotein complex responsible for the synthesis of proteins in the cell. The small ribosomal subunit (SSU) binds messenger RNAs (mRNAs) and translates the encoded message by selecting cognate aminoacyl-transfer RNA (tRNA) molecules. The large subunit (LSU) contains the ribosomal catalytic site termed the peptidyl transferase center (PTC), which catalyzes the formation of peptide bonds, thereby polymerizing the amino acids delivered by tRNAs into a polypeptide chain. The nascent polypeptides leave the ribosome through a tunnel in the LSU and interact with protein factors that function in enzymatic processing, targeting, and the membrane insertion of nascent chains at the exit of the ribosomal tunnel. This is Small ribosomal subunit protein eS17 (rps-17) from Neurospora crassa (strain ATCC 24698 / 74-OR23-1A / CBS 708.71 / DSM 1257 / FGSC 987).